The chain runs to 330 residues: GTPase Obg (330 aa).

The Obg domain maps to M1–L159. In terms of domain architecture, OBG-type G spans S160–K327. GTP-binding positions include G166 to S173, F191 to V195, D212 to G215, N279 to D282, and S308 to C310. 2 residues coordinate Mg(2+): S173 and T193.

This sequence belongs to the TRAFAC class OBG-HflX-like GTPase superfamily. OBG GTPase family. As to quaternary structure, monomer. Requires Mg(2+) as cofactor.

Its subcellular location is the cytoplasm. An essential GTPase which binds GTP, GDP and possibly (p)ppGpp with moderate affinity, with high nucleotide exchange rates and a fairly low GTP hydrolysis rate. Plays a role in control of the cell cycle, stress response, ribosome biogenesis and in those bacteria that undergo differentiation, in morphogenesis control. The sequence is that of GTPase Obg from Rickettsia rickettsii (strain Iowa).